Reading from the N-terminus, the 605-residue chain is Elongation factor 4 (605 aa).

The region spanning 11–193 (KNIRNFSIIA…TLVDVIPAPT (183 aa)) is the tr-type G domain. GTP contacts are provided by residues 23 to 28 (DHGKST) and 140 to 143 (NKID).

This sequence belongs to the TRAFAC class translation factor GTPase superfamily. Classic translation factor GTPase family. LepA subfamily.

It is found in the cell inner membrane. The enzyme catalyses GTP + H2O = GDP + phosphate + H(+). Functionally, required for accurate and efficient protein synthesis under certain stress conditions. May act as a fidelity factor of the translation reaction, by catalyzing a one-codon backward translocation of tRNAs on improperly translocated ribosomes. Back-translocation proceeds from a post-translocation (POST) complex to a pre-translocation (PRE) complex, thus giving elongation factor G a second chance to translocate the tRNAs correctly. Binds to ribosomes in a GTP-dependent manner. This is Elongation factor 4 from Acinetobacter baumannii (strain AB307-0294).